A 74-amino-acid chain; its full sequence is Protein SspS (74 aa).

It belongs to the alpha/beta-type SASP family.

In Streptococcus pyogenes, this protein is Protein SspS (sspS).